Reading from the N-terminus, the 427-residue chain is Putative acyl-CoA thioester hydrolase YbhC (427 aa).

The signal sequence occupies residues 1 to 21 (MNTFSVSRLALALAFGVTLTA). Cys22 carries N-palmitoyl cysteine lipidation. The S-diacylglycerol cysteine moiety is linked to residue Cys22. Residues 23–42 (SSTPPDQRPSDQTAPGTSSR) form a disordered region. The cysteines at positions 185 and 197 are disulfide-linked. The Nucleophile role is filled by Asp285. Arg345 is a binding site for substrate.

It belongs to the pectinesterase family.

It localises to the cell outer membrane. Putative thioesterase. Does not bind pectin, and has no pectinesterase activity. This is Putative acyl-CoA thioester hydrolase YbhC (ybhC) from Escherichia coli (strain K12).